Consider the following 326-residue polypeptide: Transcription cofactor vestigial-like protein 3 (326 aa).

Residues 54–82 are disordered; it reads SLEVTLPSKQEEEEEEEEDEEEEEKDQPA. Lysine 62 is covalently cross-linked (Glycyl lysine isopeptide (Lys-Gly) (interchain with G-Cter in SUMO2)). A compositionally biased stretch (acidic residues) spans 64-78; sequence EEEEEEEEDEEEEEK. Lysine 129 participates in a covalent cross-link: Glycyl lysine isopeptide (Lys-Gly) (interchain with G-Cter in SUMO2). Positions 184–208 are disordered; that stretch reads TADPNSWPGHGLHQTGPAPPPTASE.

Belongs to the vestigial family.

It localises to the nucleus. In terms of biological role, may act as a specific coactivator for the mammalian TEFs. This chain is Transcription cofactor vestigial-like protein 3, found in Mus musculus (Mouse).